The following is a 242-amino-acid chain: Phosphoribosyl isomerase A (242 aa).

Residue Asp-12 is the Proton acceptor of the active site. Asp-131 serves as the catalytic Proton donor.

The protein belongs to the HisA/HisF family.

It is found in the cytoplasm. The catalysed reaction is 1-(5-phospho-beta-D-ribosyl)-5-[(5-phospho-beta-D-ribosylamino)methylideneamino]imidazole-4-carboxamide = 5-[(5-phospho-1-deoxy-D-ribulos-1-ylimino)methylamino]-1-(5-phospho-beta-D-ribosyl)imidazole-4-carboxamide. It catalyses the reaction N-(5-phospho-beta-D-ribosyl)anthranilate = 1-(2-carboxyphenylamino)-1-deoxy-D-ribulose 5-phosphate. Its pathway is amino-acid biosynthesis; L-histidine biosynthesis; L-histidine from 5-phospho-alpha-D-ribose 1-diphosphate: step 4/9. It functions in the pathway amino-acid biosynthesis; L-tryptophan biosynthesis; L-tryptophan from chorismate: step 3/5. Involved in both the histidine and tryptophan biosynthetic pathways. This chain is Phosphoribosyl isomerase A, found in Streptomyces avermitilis (strain ATCC 31267 / DSM 46492 / JCM 5070 / NBRC 14893 / NCIMB 12804 / NRRL 8165 / MA-4680).